The primary structure comprises 305 residues: Protoheme IX farnesyltransferase 1 (305 aa).

A run of 8 helical transmembrane segments spans residues 22 to 42, 53 to 73, 94 to 114, 115 to 135, 154 to 174, 179 to 199, 230 to 250, and 283 to 303; these read IKTG…TLAL, IPEI…AGAF, VTGD…TIFG, LVFL…GLFL, IGSV…YPDV, IIGL…AIAI, LVIL…LMLV, and LFHM…GIFF.

It belongs to the UbiA prenyltransferase family. Protoheme IX farnesyltransferase subfamily. In terms of assembly, interacts with CtaA.

Its subcellular location is the cell membrane. It carries out the reaction heme b + (2E,6E)-farnesyl diphosphate + H2O = Fe(II)-heme o + diphosphate. Its pathway is porphyrin-containing compound metabolism; heme O biosynthesis; heme O from protoheme: step 1/1. In terms of biological role, converts heme B (protoheme IX) to heme O by substitution of the vinyl group on carbon 2 of heme B porphyrin ring with a hydroxyethyl farnesyl side group. The chain is Protoheme IX farnesyltransferase 1 from Bacillus cytotoxicus (strain DSM 22905 / CIP 110041 / 391-98 / NVH 391-98).